Here is a 391-residue protein sequence, read N- to C-terminus: Multidrug resistance protein MdtL (391 aa).

The next 12 helical transmembrane spans lie at 4-24, 42-62, 69-89, 93-113, 131-151, 158-178, 203-222, 245-265, 269-289, 293-313, 331-351, and 356-376; these read FLIC…MYLV, IAFS…GKVA, PVAI…SLAE, LFLA…VVAF, LLNG…HLIM, SLFW…LFIL, FFLS…LTFV, ALTA…LGIF, TLMI…AVSP, VSLF…GVAM, LGIA…VVGI, and MLIG…MFVA.

The protein belongs to the major facilitator superfamily. DHA1 family. MdtL (TC 2.A.1.2.22) subfamily.

It is found in the cell inner membrane. Confers resistance to chloramphenicol. The chain is Multidrug resistance protein MdtL from Escherichia coli O9:H4 (strain HS).